A 328-amino-acid polypeptide reads, in one-letter code: uncharacterized protein (328 aa).

The residue at position 170 (serine 170) is a Phosphoserine.

It is found in the cytoplasm. The protein resides in the nucleus. This is an uncharacterized protein from Schizosaccharomyces pombe (strain 972 / ATCC 24843) (Fission yeast).